The chain runs to 290 residues: Acetyl-coenzyme A carboxylase carboxyl transferase subunit beta (290 aa).

A CoA carboxyltransferase N-terminal domain is found at 27 to 290 (LWVKCPSCEA…LQRQPADALA (264 aa)). 4 residues coordinate Zn(2+): C31, C34, C50, and C53. The C4-type zinc finger occupies 31–53 (CPSCEAVLYRNDVDANLHVCPKC).

The protein belongs to the AccD/PCCB family. In terms of assembly, acetyl-CoA carboxylase is a heterohexamer composed of biotin carboxyl carrier protein (AccB), biotin carboxylase (AccC) and two subunits each of ACCase subunit alpha (AccA) and ACCase subunit beta (AccD). The cofactor is Zn(2+).

The protein localises to the cytoplasm. It catalyses the reaction N(6)-carboxybiotinyl-L-lysyl-[protein] + acetyl-CoA = N(6)-biotinyl-L-lysyl-[protein] + malonyl-CoA. The protein operates within lipid metabolism; malonyl-CoA biosynthesis; malonyl-CoA from acetyl-CoA: step 1/1. Its function is as follows. Component of the acetyl coenzyme A carboxylase (ACC) complex. Biotin carboxylase (BC) catalyzes the carboxylation of biotin on its carrier protein (BCCP) and then the CO(2) group is transferred by the transcarboxylase to acetyl-CoA to form malonyl-CoA. This Burkholderia cenocepacia (strain ATCC BAA-245 / DSM 16553 / LMG 16656 / NCTC 13227 / J2315 / CF5610) (Burkholderia cepacia (strain J2315)) protein is Acetyl-coenzyme A carboxylase carboxyl transferase subunit beta.